Reading from the N-terminus, the 154-residue chain is Myoglobin (154 aa).

In terms of domain architecture, Globin spans 2–148 (GLSDGEWQIV…FRNDIAAKYK (147 aa)). A Phosphoserine modification is found at S4. Residue H65 participates in nitrite binding. H65 provides a ligand contact to O2. Phosphothreonine is present on T68. Position 94 (H94) interacts with heme b.

The protein belongs to the globin family. Monomeric.

The protein resides in the cytoplasm. It is found in the sarcoplasm. The catalysed reaction is Fe(III)-heme b-[protein] + nitric oxide + H2O = Fe(II)-heme b-[protein] + nitrite + 2 H(+). It carries out the reaction H2O2 + AH2 = A + 2 H2O. Functionally, monomeric heme protein which primary function is to store oxygen and facilitate its diffusion within muscle tissues. Reversibly binds oxygen through a pentacoordinated heme iron and enables its timely and efficient release as needed during periods of heightened demand. Depending on the oxidative conditions of tissues and cells, and in addition to its ability to bind oxygen, it also has a nitrite reductase activity whereby it regulates the production of bioactive nitric oxide. Under stress conditions, like hypoxia and anoxia, it also protects cells against reactive oxygen species thanks to its pseudoperoxidase activity. The protein is Myoglobin (MB) of Canis lupus familiaris (Dog).